We begin with the raw amino-acid sequence, 442 residues long: Probable serine/threonine-protein kinase PBL17 (442 aa).

G2 carries N-myristoyl glycine lipidation. Residue C4 is the site of S-palmitoyl cysteine attachment. Residue T79 is modified to Phosphothreonine. The 281-residue stretch at 90–370 folds into the Protein kinase domain; it reads FRPDYILGEG…NHVVEVLETL (281 aa). Residues 96-104 and K125 contribute to the ATP site; that span reads LGEGGFGVV. Position 170 is a phosphotyrosine (Y170). Catalysis depends on D220, which acts as the Proton acceptor. A Phosphoserine modification is found at S254. A phosphothreonine mark is found at T255 and T260. Y268 is modified (phosphotyrosine). Residues 385–442 are disordered; that stretch reads HSRGKSVTLYEASSDSQGTRDGNGQRRRRPESGRSKSEAAVDTEKYVSTLSEPDTTKI. The span at 395 to 406 shows a compositional bias: polar residues; the sequence is EASSDSQGTRDG. The segment covering 414-429 has biased composition (basic and acidic residues); that stretch reads PESGRSKSEAAVDTEK. Over residues 430–442 the composition is skewed to polar residues; it reads YVSTLSEPDTTKI.

It belongs to the protein kinase superfamily. Ser/Thr protein kinase family.

The protein localises to the cell membrane. It carries out the reaction L-seryl-[protein] + ATP = O-phospho-L-seryl-[protein] + ADP + H(+). The enzyme catalyses L-threonyl-[protein] + ATP = O-phospho-L-threonyl-[protein] + ADP + H(+). Functionally, may be involved in plant defense signaling. This Arabidopsis thaliana (Mouse-ear cress) protein is Probable serine/threonine-protein kinase PBL17.